Reading from the N-terminus, the 628-residue chain is Cystathionine gamma-synthase-like enzyme iboG2 (628 aa).

A substrate-binding site is contributed by Tyr-313. Lys-417 carries the N6-(pyridoxal phosphate)lysine modification.

Belongs to the trans-sulfuration enzymes family. It depends on pyridoxal 5'-phosphate as a cofactor.

It participates in secondary metabolite biosynthesis. Cystathionine gamma-synthase-like enzyme; part of the gene cluster that mediates the biosynthesis of the psychoactive metabolites ibotenic acid and muscimol. The first committed step is glutamate hydroxylation by the 2-oxoglutarate-dependent dioxygenase iboH, and the last step is decarboxylation of ibotenic acid to muscimol by the decarboxylase iboD. The order of the intermediate reactions is somewhat ambiguous. IboA likely activates the carboxylic acid at position 5 to introduce an amide bond, and the flavin monooxygenase iboF generates the N-O bond. There are several options for the latter step. One option is that iboF directly hydroxylates the amide nitrogen formed by iboA to produce a hydroxamic acid species. Another option is that iboF hydroxylates an external N-containing compound, whose resulting N-O bond is subsequently introduced into the hydroxyglutamate scaffold. The paralogous PLP-dependent cystathionine gamma-synthase-like enzymes iboG1 and iboG2 are likely involved in substitution of the OH group at position 3 by the O-N moiety. The first cyclic intermediate is most probably tricholomic acid which is likely desaturated to ibotenic acid by the cytochrome P450 monooxygenase iboC. The sequence is that of Cystathionine gamma-synthase-like enzyme iboG2 from Amanita muscaria (strain Koide BX008).